A 406-amino-acid polypeptide reads, in one-letter code: Acetylornithine/succinyldiaminopimelate aminotransferase (406 aa).

Residues 108 to 109 and Phe141 contribute to the pyridoxal 5'-phosphate site; that span reads GT. Arg144 is a N(2)-acetyl-L-ornithine binding site. A pyridoxal 5'-phosphate-binding site is contributed by 226-229; sequence DEVQ. Lys255 carries the N6-(pyridoxal phosphate)lysine modification. N(2)-acetyl-L-ornithine is bound at residue Ser283. Residue Thr284 coordinates pyridoxal 5'-phosphate.

Belongs to the class-III pyridoxal-phosphate-dependent aminotransferase family. ArgD subfamily. As to quaternary structure, homodimer. Pyridoxal 5'-phosphate serves as cofactor.

It is found in the cytoplasm. The enzyme catalyses N(2)-acetyl-L-ornithine + 2-oxoglutarate = N-acetyl-L-glutamate 5-semialdehyde + L-glutamate. It carries out the reaction N-succinyl-(2S,6S)-2,6-diaminopimelate + 2-oxoglutarate = (S)-2-succinylamino-6-oxoheptanedioate + L-glutamate. The protein operates within amino-acid biosynthesis; L-arginine biosynthesis; N(2)-acetyl-L-ornithine from L-glutamate: step 4/4. It participates in amino-acid biosynthesis; L-lysine biosynthesis via DAP pathway; LL-2,6-diaminopimelate from (S)-tetrahydrodipicolinate (succinylase route): step 2/3. In terms of biological role, involved in both the arginine and lysine biosynthetic pathways. This Escherichia coli O6:H1 (strain CFT073 / ATCC 700928 / UPEC) protein is Acetylornithine/succinyldiaminopimelate aminotransferase.